The sequence spans 150 residues: MEVFMVGTALLKLIAVIDSKHMMLYDALGIKITTNKPLKLTLDLEEHHHHREKRQSLYQNKSTPGSLFEPHTSLKDIEHKEAARSVIKHLEKVTTANQAKYKELIIIAEPKMLGCVRQELTSGLKKIVTKEIAKDLVQHNVDAVERAVFA.

This is an uncharacterized protein from Rickettsia prowazekii (strain Madrid E).